The primary structure comprises 354 residues: UDP-N-acetylglucosamine--N-acetylmuramyl-(pentapeptide) pyrophosphoryl-undecaprenol N-acetylglucosamine transferase (354 aa).

UDP-N-acetyl-alpha-D-glucosamine-binding positions include 15–17 (TGG), Asn127, Arg163, Ser191, Ile244, 263–268 (ALTVSE), and Gln288.

It belongs to the glycosyltransferase 28 family. MurG subfamily.

It localises to the cell inner membrane. It carries out the reaction di-trans,octa-cis-undecaprenyl diphospho-N-acetyl-alpha-D-muramoyl-L-alanyl-D-glutamyl-meso-2,6-diaminopimeloyl-D-alanyl-D-alanine + UDP-N-acetyl-alpha-D-glucosamine = di-trans,octa-cis-undecaprenyl diphospho-[N-acetyl-alpha-D-glucosaminyl-(1-&gt;4)]-N-acetyl-alpha-D-muramoyl-L-alanyl-D-glutamyl-meso-2,6-diaminopimeloyl-D-alanyl-D-alanine + UDP + H(+). It participates in cell wall biogenesis; peptidoglycan biosynthesis. Functionally, cell wall formation. Catalyzes the transfer of a GlcNAc subunit on undecaprenyl-pyrophosphoryl-MurNAc-pentapeptide (lipid intermediate I) to form undecaprenyl-pyrophosphoryl-MurNAc-(pentapeptide)GlcNAc (lipid intermediate II). This Vibrio cholerae serotype O1 (strain ATCC 39315 / El Tor Inaba N16961) protein is UDP-N-acetylglucosamine--N-acetylmuramyl-(pentapeptide) pyrophosphoryl-undecaprenol N-acetylglucosamine transferase.